Here is a 165-residue protein sequence, read N- to C-terminus: Growth arrest and DNA damage-inducible protein GADD45 alpha (165 aa).

Phosphothreonine is present on T2.

The protein belongs to the GADD45 family. In terms of assembly, interacts with MAPK14. Predominantly monomeric but also forms dimers and other oligomers as concentration increases. Interacts with GADD45GIP1. Interacts weakly with PCNA. Interacts with AURKA, likely to compete with dimerization.

The protein localises to the nucleus. Its function is as follows. In T-cells, functions as a regulator of p38 MAPKs by inhibiting p88 phosphorylation and activity. Might affect PCNA interaction with some CDK (cell division protein kinase) complexes; stimulates DNA excision repair in vitro and inhibits entry of cells into S phase. The protein is Growth arrest and DNA damage-inducible protein GADD45 alpha (GADD45A) of Homo sapiens (Human).